Reading from the N-terminus, the 523-residue chain is 2-isopropylmalate synthase (523 aa).

In terms of domain architecture, Pyruvate carboxyltransferase spans 5–267 (VIIFDTTLRD…HTAINHQEIW (263 aa)). Mn(2+) contacts are provided by Asp-14, His-202, His-204, and Asn-238. The interval 392–523 (RLDYFSVQSG…QHNENNKETV (132 aa)) is regulatory domain.

The protein belongs to the alpha-IPM synthase/homocitrate synthase family. LeuA type 1 subfamily. In terms of assembly, homodimer. It depends on Mn(2+) as a cofactor.

It is found in the cytoplasm. It carries out the reaction 3-methyl-2-oxobutanoate + acetyl-CoA + H2O = (2S)-2-isopropylmalate + CoA + H(+). It functions in the pathway amino-acid biosynthesis; L-leucine biosynthesis; L-leucine from 3-methyl-2-oxobutanoate: step 1/4. Functionally, catalyzes the condensation of the acetyl group of acetyl-CoA with 3-methyl-2-oxobutanoate (2-ketoisovalerate) to form 3-carboxy-3-hydroxy-4-methylpentanoate (2-isopropylmalate). In Shigella flexneri, this protein is 2-isopropylmalate synthase.